Consider the following 246-residue polypeptide: Putative S-adenosyl-L-methionine-dependent methyltransferase Mflv_0168 (246 aa).

Residues Asp-112 and 141 to 142 (DL) each bind S-adenosyl-L-methionine.

The protein belongs to the UPF0677 family.

Exhibits S-adenosyl-L-methionine-dependent methyltransferase activity. The polypeptide is Putative S-adenosyl-L-methionine-dependent methyltransferase Mflv_0168 (Mycolicibacterium gilvum (strain PYR-GCK) (Mycobacterium gilvum (strain PYR-GCK))).